The sequence spans 605 residues: Glucose oxidase (605 aa).

Residues 1–18 (MVSVFLSTLLLAAATVQA) form the signal peptide. Residues Leu52, Thr53, and Glu73 each coordinate FAD. Asn111 carries an N-linked (GlcNAc...) asparagine glycan. Residues Ser125, Asn129, Gly130, and Ser132 each contribute to the FAD site. Residues Asn183 and Asn190 are each glycosylated (N-linked (GlcNAc...) asparagine). Residues Cys186 and Cys228 are joined by a disulfide bond. Val272 is an FAD binding site. 4 N-linked (GlcNAc...) asparagine glycosylation sites follow: Asn335, Asn375, Asn410, and Asn519. His538 (proton acceptor) is an active-site residue. O2 is bound by residues Lys559 and Val560. 2 residues coordinate FAD: Gly571 and Met583.

It belongs to the GMC oxidoreductase family. Homodimer. It depends on FAD as a cofactor.

The protein resides in the secreted. The protein localises to the cell wall. It is found in the cytoplasmic vesicle. The enzyme catalyses beta-D-glucose + O2 = D-glucono-1,5-lactone + H2O2. Functionally, glucose oxidase catalyzes the oxidation of beta-D-glucose to D-glucono-delta-lactone and hydrogen peroxide in the presence of molecular oxygen. D-glucono-delta-lactone is sequentially hydrolyzed by lactonase to D-gluconic acid, and the resulting hydrogen peroxide is hydrolyzed by catalase to oxygen and water. Glucose oxidase alone indirectly causes toxicity in the presence of glucose and is the active compound of the antifungal antibiotic talaron. Responsible for inhibition of germination of microsclerotia of Verticillium dahliae. This is Glucose oxidase from Talaromyces flavus.